Reading from the N-terminus, the 126-residue chain is uncharacterized protein (126 aa).

A helical membrane pass occupies residues 55–77 (MLLINSNLVLSGLLLFIDVYRAA).

It is found in the membrane. This is an uncharacterized protein from Dictyostelium discoideum (Social amoeba).